Consider the following 305-residue polypeptide: Ribonuclease BN (305 aa).

7 residues coordinate Zn(2+): His64, His66, Asp68, His69, His141, Asp212, and His270. The active-site Proton acceptor is the Asp68.

It belongs to the RNase Z family. RNase BN subfamily. As to quaternary structure, homodimer. The cofactor is Zn(2+).

Zinc phosphodiesterase, which has both exoribonuclease and endoribonuclease activities. The sequence is that of Ribonuclease BN from Escherichia coli O7:K1 (strain IAI39 / ExPEC).